The primary structure comprises 161 residues: Putative acetyltransferase SAV0762 (161 aa).

The protein belongs to the transferase hexapeptide repeat family.

This chain is Putative acetyltransferase SAV0762, found in Staphylococcus aureus (strain Mu50 / ATCC 700699).